The sequence spans 236 residues: Small ribosomal subunit protein bS21m (236 aa).

The segment at 65 to 136 (KPAAGAAAGG…SSKPSPMQTW (72 aa)) is disordered. Residues 107–131 (SNSSTSSSSSSSSSGGALYSSSKPS) are compositionally biased toward low complexity.

The protein belongs to the bacterial ribosomal protein bS21 family. Component of the mitochondrial small ribosomal subunit (mt-SSU). Mature N.crassa 74S mitochondrial ribosomes consist of a small (37S) and a large (54S) subunit. The 37S small subunit contains a 16S ribosomal RNA (16S mt-rRNA) and 32 different proteins. The 54S large subunit contains a 23S rRNA (23S mt-rRNA) and 42 different proteins.

Its subcellular location is the mitochondrion. Functionally, component of the mitochondrial ribosome (mitoribosome), a dedicated translation machinery responsible for the synthesis of mitochondrial genome-encoded proteins, including at least some of the essential transmembrane subunits of the mitochondrial respiratory chain. The mitoribosomes are attached to the mitochondrial inner membrane and translation products are cotranslationally integrated into the membrane. The chain is Small ribosomal subunit protein bS21m (mrp21) from Neurospora crassa (strain ATCC 24698 / 74-OR23-1A / CBS 708.71 / DSM 1257 / FGSC 987).